We begin with the raw amino-acid sequence, 483 residues long: Deoxyribodipyrimidine photo-lyase (483 aa).

Residues 2-136 (QKNLIWFRND…LVKGFHDNLL (135 aa)) form the Photolyase/cryptochrome alpha/beta domain. (6R)-5,10-methylene-5,6,7,8-tetrahydrofolate is bound by residues N109 and E110. FAD is bound at residue Y225. R229 is a binding site for DNA. Position 237-241 (237-241 (TSMLS)) interacts with FAD. Interaction with DNA stretches follow at residues 278-285 (QILWREFY) and 345-346 (NR). 376–378 (DGD) is an FAD binding site. Q408 is a binding site for DNA.

It belongs to the DNA photolyase class-1 family. As to quaternary structure, monomer. It depends on FAD as a cofactor. Requires (6R)-5,10-methylene-5,6,7,8-tetrahydrofolate as cofactor.

The catalysed reaction is cyclobutadipyrimidine (in DNA) = 2 pyrimidine residues (in DNA).. Its function is as follows. Involved in repair of UV radiation-induced DNA damage. Catalyzes the light-dependent monomerization (300-600 nm) of cyclobutyl pyrimidine dimers (in cis-syn configuration), which are formed between adjacent bases on the same DNA strand upon exposure to ultraviolet radiation. In Buchnera aphidicola subsp. Acyrthosiphon pisum (strain APS) (Acyrthosiphon pisum symbiotic bacterium), this protein is Deoxyribodipyrimidine photo-lyase (phrB).